We begin with the raw amino-acid sequence, 332 residues long: Agamous-like MADS-box protein AGL66 (332 aa).

One can recognise an MADS-box domain in the interval 1–61 (MGRVKLEIKR…DRLSLFSGKT (61 aa)). Residues 120 to 151 (TAINSDVEELEHEVYKLQQQLLMAEEELRKYE) are a coiled coil.

In terms of assembly, forms a heterodimer with AGL30. Expressed in pollen.

Its subcellular location is the nucleus. In terms of biological role, probable transcription factor that forms a heterodimer with the MADS-box protein AGL30 and is involved in the regulation of pollen maturation at the late stages of pollen development and pollen tube growth. This Arabidopsis thaliana (Mouse-ear cress) protein is Agamous-like MADS-box protein AGL66.